The chain runs to 91 residues: MILIYDINTEDNDGKRRLVKIMKTSRKYLSHVQKSVFEGDITEGQISLLKKEIMAIVNMKKDFVIIYSLRDGVKLNREILTDTPDPTDNFL.

Aspartate 6 provides a ligand contact to Mg(2+).

Belongs to the CRISPR-associated endoribonuclease Cas2 protein family. As to quaternary structure, homodimer, forms a heterotetramer with a Cas1 homodimer. Mg(2+) serves as cofactor.

CRISPR (clustered regularly interspaced short palindromic repeat), is an adaptive immune system that provides protection against mobile genetic elements (viruses, transposable elements and conjugative plasmids). CRISPR clusters contain sequences complementary to antecedent mobile elements and target invading nucleic acids. CRISPR clusters are transcribed and processed into CRISPR RNA (crRNA). Functions as a ssRNA-specific endoribonuclease. Involved in the integration of spacer DNA into the CRISPR cassette. This Moorella thermoacetica (strain ATCC 39073 / JCM 9320) protein is CRISPR-associated endoribonuclease Cas2 2.